Here is a 369-residue protein sequence, read N- to C-terminus: Chorismate synthase (369 aa).

Positions 48 and 54 each coordinate NADP(+). Residues 125–127 (RSS), 238–239 (NA), Gly-283, 298–302 (KPTSS), and Arg-324 contribute to the FMN site.

Belongs to the chorismate synthase family. In terms of assembly, homotetramer. FMNH2 is required as a cofactor.

The catalysed reaction is 5-O-(1-carboxyvinyl)-3-phosphoshikimate = chorismate + phosphate. Its pathway is metabolic intermediate biosynthesis; chorismate biosynthesis; chorismate from D-erythrose 4-phosphate and phosphoenolpyruvate: step 7/7. Its function is as follows. Catalyzes the anti-1,4-elimination of the C-3 phosphate and the C-6 proR hydrogen from 5-enolpyruvylshikimate-3-phosphate (EPSP) to yield chorismate, which is the branch point compound that serves as the starting substrate for the three terminal pathways of aromatic amino acid biosynthesis. This reaction introduces a second double bond into the aromatic ring system. This is Chorismate synthase from Acidiphilium cryptum (strain JF-5).